Here is a 779-residue protein sequence, read N- to C-terminus: Translation initiation factor IF-2 (779 aa).

The disordered stretch occupies residues 44 to 193; the sequence is RQLDNAVDGT…TPPKPKELPE (150 aa). The segment covering 53 to 65 has biased composition (basic and acidic residues); that stretch reads TNKKAEAPKKETT. The segment covering 66-81 has biased composition (polar residues); the sequence is SNENGNSKGPNKPNMT. 2 stretches are compositionally biased toward low complexity: residues 82-93 and 117-167; these read NSNEKSNKPNKP and ANTS…NNKG. The tr-type G domain maps to 280–449; the sequence is ERPPVVTIMG…LLVSEVEELK (170 aa). Residues 289-296 form a G1 region; sequence GHVDHGKT. 289 to 296 serves as a coordination point for GTP; it reads GHVDHGKT. Residues 314 to 318 are G2; sequence GITQH. A G3 region spans residues 335-338; it reads DTPG. GTP is bound by residues 335–339 and 389–392; these read DTPGH and NKID. Positions 389–392 are G4; sequence NKID. Positions 425-427 are G5; it reads SAK.

Belongs to the TRAFAC class translation factor GTPase superfamily. Classic translation factor GTPase family. IF-2 subfamily.

It is found in the cytoplasm. One of the essential components for the initiation of protein synthesis. Protects formylmethionyl-tRNA from spontaneous hydrolysis and promotes its binding to the 30S ribosomal subunits. Also involved in the hydrolysis of GTP during the formation of the 70S ribosomal complex. The sequence is that of Translation initiation factor IF-2 from Listeria monocytogenes serovar 1/2a (strain ATCC BAA-679 / EGD-e).